The sequence spans 101 residues: Putative fatty acid-binding protein 5-like protein 3 (101 aa).

This sequence belongs to the calycin superfamily. Fatty-acid binding protein (FABP) family.

High specificity for fatty acids. This is Putative fatty acid-binding protein 5-like protein 3 (FABP5P3) from Homo sapiens (Human).